We begin with the raw amino-acid sequence, 398 residues long: Acetate kinase (398 aa).

Mg(2+) is bound at residue Asn-8. Residue Lys-15 participates in ATP binding. Arg-89 contacts substrate. The active-site Proton donor/acceptor is the Asp-146. ATP-binding positions include 206-210 (HIGNG), 283-285 (DMR), and 331-335 (GMGEN). Glu-383 serves as a coordination point for Mg(2+).

This sequence belongs to the acetokinase family. In terms of assembly, homodimer. Requires Mg(2+) as cofactor. Mn(2+) is required as a cofactor.

It localises to the cytoplasm. It carries out the reaction acetate + ATP = acetyl phosphate + ADP. The protein operates within metabolic intermediate biosynthesis; acetyl-CoA biosynthesis; acetyl-CoA from acetate: step 1/2. Functionally, catalyzes the formation of acetyl phosphate from acetate and ATP. Can also catalyze the reverse reaction. In Streptococcus pyogenes serotype M49 (strain NZ131), this protein is Acetate kinase.